The chain runs to 170 residues: Translationally-controlled tumor protein homolog (170 aa).

The TCTP domain maps to 1 to 170 (MLIYNDILNG…WKHGLKETKV (170 aa)).

This sequence belongs to the TCTP family.

Its subcellular location is the cytoplasm. It is found in the cytoskeleton. In terms of biological role, involved in protein synthesis. Involved in microtubule stabilization. This chain is Translationally-controlled tumor protein homolog, found in Gibberella zeae (strain ATCC MYA-4620 / CBS 123657 / FGSC 9075 / NRRL 31084 / PH-1) (Wheat head blight fungus).